Consider the following 430-residue polypeptide: Immunoglobulin heavy constant delta (430 aa).

Over 1–406 (APTKAPDVFP…FDDVGSLWTT (406 aa)) the chain is Extracellular. Residues 6 to 98 (PDVFPIISGC…TASKSKKEIF (93 aa)) enclose the Ig-like 1 domain. A disulfide bridge links C28 with C84. A disordered region spans residues 96 to 167 (EIFRWPESPK…TPECPSHTQP (72 aa)). A compositionally biased stretch (polar residues) spans 106–118 (AQASSVPTAQPQA). S109 and S110 each carry an O-linked (GalNAc...) serine glycan. Residues T113, T126, T127, T131, and T132 are each glycosylated (O-linked (GalNAc...) threonine). Basic and acidic residues predominate over residues 138–158 (GGEEKKKEKEKEEQEERETKT). Ig-like domains follow at residues 175 to 263 (PAVQ…RLMA) and 267 to 373 (PAAQ…RSLE). 2 cysteine pairs are disulfide-bonded: C190/C249 and C294/C355. N-linked (GlcNAc...) asparagine glycans are attached at residues N225, N316, and N367. A helical transmembrane segment spans residues 407–427 (LSTFVALFILTLLYSGIVTFI). The Cytoplasmic segment spans residues 428-430 (KVK).

Immunoglobulins are composed of two identical heavy chains and two identical light chains; disulfide-linked. An IgD molecule contains thus a delta heavy chain combined with either a kappa or a lambda light chains. Kappa light chains are found predominantly on the membrane IgD (mIgD) form and lambda on the secreted IgD (sIgD) form, this fact is poorly understood. Membrane-bound IgD molecules are non-covalently associated with a heterodimer of CD79A and CD79B.

The protein localises to the secreted. It is found in the cell membrane. Constant region of immunoglobulin heavy chains. Immunoglobulins, also known as antibodies, are membrane-bound or secreted glycoproteins produced by B lymphocytes. In the recognition phase of humoral immunity, the membrane-bound immunoglobulins serve as receptors which, upon binding of a specific antigen, trigger the clonal expansion and differentiation of B lymphocytes into immunoglobulins-secreting plasma cells. Secreted immunoglobulins mediate the effector phase of humoral immunity, which results in the elimination of bound antigens. The antigen binding site is formed by the variable domain of one heavy chain, together with that of its associated light chain. Thus, each immunoglobulin has two antigen binding sites with remarkable affinity for a particular antigen. The variable domains are assembled by a process called V-(D)-J rearrangement and can then be subjected to somatic hypermutations which, after exposure to antigen and selection, allow affinity maturation for a particular antigen. IgD is the major antigen receptor isotype on the surface of most peripheral B-cells, where it is coexpressed with IgM. The membrane-bound IgD (mIgD) induces the phosphorylation of CD79A and CD79B by the Src family of protein tyrosine kinases. Soluble IgD (sIgD) concentration in serum below those of IgG, IgA, and IgM but much higher than that of IgE. IgM and IgD molecules present on B cells have identical V regions and antigen-binding sites. After the antigen binds to the B-cell receptor, the secreted form sIgD is shut off. IgD is a potent inducer of TNF, IL1B, and IL1RN. IgD also induces release of IL6, IL10, and LIF from peripheral blood mononuclear cells. Monocytes seem to be the main producers of cytokines in vitro in the presence of IgD. The sequence is that of Immunoglobulin heavy constant delta from Homo sapiens (Human).